We begin with the raw amino-acid sequence, 350 residues long: UDP-N-acetylenolpyruvoylglucosamine reductase (350 aa).

The FAD-binding PCMH-type domain occupies 24 to 195 (HVEATARWLL…VAVEFNLPLL (172 aa)). Residue R172 is part of the active site. Catalysis depends on S245, which acts as the Proton donor. E342 is a catalytic residue.

Belongs to the MurB family. It depends on FAD as a cofactor.

The protein resides in the cytoplasm. The catalysed reaction is UDP-N-acetyl-alpha-D-muramate + NADP(+) = UDP-N-acetyl-3-O-(1-carboxyvinyl)-alpha-D-glucosamine + NADPH + H(+). The protein operates within cell wall biogenesis; peptidoglycan biosynthesis. Cell wall formation. In Xanthomonas axonopodis pv. citri (strain 306), this protein is UDP-N-acetylenolpyruvoylglucosamine reductase.